Consider the following 552-residue polypeptide: Kumamolisin (552 aa).

Over residues 1–17 (MSDMEKPWKEEEKREVL) the composition is skewed to basic and acidic residues. Residues 1–34 (MSDMEKPWKEEEKREVLAGHARRQAPQAVDKGPV) are disordered. The Peptidase S53 domain occupies 193-546 (AYTPLDVAQA…IRLLQALLPS (354 aa)). Catalysis depends on charge relay system residues E266, D270, and S466. Residues D504, I505, G522, G524, and D526 each coordinate Ca(2+).

Forms monomeric and dimeric crystals. Ca(2+) serves as cofactor. Post-translationally, autocatalytically processed.

It is found in the secreted. It catalyses the reaction The enzyme preferentially hydrolyzes peptides having an Ala or Pro residue at P2 position and prefers such charged amino acid residues as Glu or Arg at the P2' position. In the oxidized insulin B chain, kumamolysin preferentially cleaves between Leu(15) and Tyr(16).. Its activity is regulated as follows. Inactivated at 22.4 and 37 degrees Celsius, but not at 60 degrees Celsius, by aldehyde-type inhibitors such as acetyl-Ile-Ala-Phe-CHO and acetyl-Ile-Pro-Phe-CHO. Insensitive to the known carboxyl proteinase inhibitors pepstatin, diazoacetyl-DL-norleucine methyl ester (DAN) and 1,2-epoxy-3-(p-nitrophenoxy)propane (EPNP). Not inhibited by Ala-Ala-Phe-chloromethylketone, an inhibitor of the human tripeptidyl-peptidase 1. In terms of biological role, thermostable pepstatin-insensitive serine-carboxyl proteinase. Preferentially hydrolyzes synthetic peptides having an Ala or Pro residue at the P2 position and charged amino acids such as Glu or Arg at the P2' position. In vitro, specifically hydrolyzes the Leu-15-Tyr-16 peptide bond in oxidized insulin B-chain. Additional cleavage of oxidized insulin B-chain at Phe-25-Tyr-26 is detected at a considerably lower rate. Can hydrolyze collagen and the chromogenic substrate azocoll. Shows lower activity with albumin and casein. Shows very weak tripeptidyl peptidase activity. The chain is Kumamolisin from Bacillus sp. (strain MN-32).